Reading from the N-terminus, the 122-residue chain is Large ribosomal subunit protein uL14 (122 aa).

Belongs to the universal ribosomal protein uL14 family. As to quaternary structure, part of the 50S ribosomal subunit. Forms a cluster with proteins L3 and L19. In the 70S ribosome, L14 and L19 interact and together make contacts with the 16S rRNA in bridges B5 and B8.

Functionally, binds to 23S rRNA. Forms part of two intersubunit bridges in the 70S ribosome. In Caldicellulosiruptor bescii (strain ATCC BAA-1888 / DSM 6725 / KCTC 15123 / Z-1320) (Anaerocellum thermophilum), this protein is Large ribosomal subunit protein uL14.